Reading from the N-terminus, the 225-residue chain is uncharacterized protein (225 aa).

A helical membrane pass occupies residues 12–32 (AGFMMIFVFVIASFLLVLLFF).

Its subcellular location is the cell membrane. This is an uncharacterized protein from Bacillus subtilis (strain 168).